Here is a 287-residue protein sequence, read N- to C-terminus: Diaminopimelate epimerase (287 aa).

2 residues coordinate substrate: asparagine 15 and asparagine 66. Cysteine 75 functions as the Proton donor in the catalytic mechanism. Residues 76–77 (GN), asparagine 170, asparagine 203, and 221–222 (ER) each bind substrate. Cysteine 230 acts as the Proton acceptor in catalysis. 231–232 (GT) contacts substrate.

The protein belongs to the diaminopimelate epimerase family. Homodimer.

Its subcellular location is the cytoplasm. It catalyses the reaction (2S,6S)-2,6-diaminopimelate = meso-2,6-diaminopimelate. The protein operates within amino-acid biosynthesis; L-lysine biosynthesis via DAP pathway; DL-2,6-diaminopimelate from LL-2,6-diaminopimelate: step 1/1. Functionally, catalyzes the stereoinversion of LL-2,6-diaminopimelate (L,L-DAP) to meso-diaminopimelate (meso-DAP), a precursor of L-lysine and an essential component of the bacterial peptidoglycan. This chain is Diaminopimelate epimerase, found in Desulfovibrio desulfuricans (strain ATCC 27774 / DSM 6949 / MB).